The following is a 513-amino-acid chain: Calcium-binding mitochondrial carrier protein SCaMC-2 (513 aa).

Over 1–233 the chain is Mitochondrial intermembrane; sequence MARPRSLVSP…EKQTGMWWRH (233 aa). EF-hand domains lie at 55–90, 91–124, 122–157, and 158–193; these read EHETRLQILFQELDVNKDGGICINDLAVGLKRLGVH, RTELELRKIVKAGDKDQDGQLDFEEFVHYLRDHE, DHEKKLRLVFKSLDKKNDGRIDAQEIMQSLRDLGVN, and ISEQQAEKILKSMDKNGTMTIDWNEWRDYHLLHPAE. Ca(2+)-binding residues include D68, N70, D72, D79, D104, D106, D108, Q110, and E115. Solcar repeat units follow at residues 228–314, 322–407, and 419–507; these read GMWW…MKRI, LGIH…LKNA, and PGVF…LKLT. Residues 234-251 traverse the membrane as a helical segment; sequence LVAGGGAGAVSRTCTAPL. The Mitochondrial matrix portion of the chain corresponds to 252–288; sequence DRLKVLMQVHASRSNNMSMLGGFTQMIREGGIRSLWR. The helical transmembrane segment at 289–308 threads the bilayer; the sequence is GNGINVIKIAPESAIKFMAY. The Mitochondrial intermembrane portion of the chain corresponds to 309-331; sequence EQMKRIIGSDQETLGIHERLVAG. The helical transmembrane segment at 332-345 threads the bilayer; sequence SLAGVIAQSSIYPM. The Mitochondrial matrix segment spans residues 346–381; that stretch reads EVLKTRMALRKTGQYQGMLDCGKKILLKEGVSAFYK. A helical membrane pass occupies residues 382-401; that stretch reads GYVPNMLGIIPYAGIDLAVY. The Mitochondrial intermembrane segment spans residues 402-424; the sequence is ETLKNAWLQRYATSSADPGVFVL. Residues 425–442 traverse the membrane as a helical segment; that stretch reads LACGTISSTCGQLASYPL. The Mitochondrial matrix portion of the chain corresponds to 443-481; sequence ALVRTRMQAEASVEGAPQMTMSKLFKHIVKTEGAFGLYR. Residues 482-501 traverse the membrane as a helical segment; it reads GLAPNFMKVIPAVSISYVVY. The Mitochondrial intermembrane portion of the chain corresponds to 502 to 513; that stretch reads ENLKLTLGVQSR.

Belongs to the mitochondrial carrier (TC 2.A.29) family.

The protein localises to the mitochondrion inner membrane. Functionally, calcium-dependent mitochondrial solute carrier. The protein is Calcium-binding mitochondrial carrier protein SCaMC-2 (slc25a25) of Xenopus tropicalis (Western clawed frog).